Consider the following 215-residue polypeptide: Sodium channel regulatory subunit beta-3 (215 aa).

Residues 1–22 (MPAFNRLFPLVSLVLIYWASVC) form the signal peptide. The Extracellular segment spans residues 23–156 (FPVCVEVPSE…EEAGEDFTSV (134 aa)). An Ig-like C2-type domain is found at 24–138 (PVCVEVPSET…EAHRPFVKTT (115 aa)). Cystine bridges form between Cys26–Cys48 and Cys45–Cys120. N-linked (GlcNAc...) asparagine glycans are attached at residues Asn95, Asn109, Asn113, and Asn121. A helical membrane pass occupies residues 157-178 (VSEIMMYILLVFLTLWLLIEMI). The Cytoplasmic segment spans residues 179–215 (YCYRKVSKAEEAAQENASDYLAIPSENKENSAVPVEE).

The protein belongs to the sodium channel auxiliary subunit SCN3B (TC 8.A.17) family. As to quaternary structure, a voltage-gated sodium (Nav) channel consists of an ion-conducting pore-forming alpha subunit functional on its own that is regulated by one or more beta subunits. Forms homodimers and homotrimers. SCN3B is non-covalently associated with alpha subunits and induces the formation of alpha subunit oligomers, including trimers. Interacts with SCN5A/Nav1.5; regulatory subunit of SCN5A/Nav1.5. Interacts with SCN7A/Nav2.1; probable regulatory subunit of SCN7A/Nav2.1. Interacts with SCN10A; regulatory subunit of SCN10A/Nav1.8. Interacts with NFASC; probably involved in targeting the sodium channels to the nodes of Ranvier. Intramolecular disulfide bonds favor the voltage-gated sodium channel oligomeric complex assembly. In terms of processing, N-glycosylated.

The protein localises to the cell membrane. In terms of biological role, regulatory subunit of multiple voltage-gated sodium (Nav) channels directly mediating the depolarization of excitable membranes. Navs, also called VGSCs (voltage-gated sodium channels) or VDSCs (voltage-dependent sodium channels), operate by switching between closed and open conformations depending on the voltage difference across the membrane. In the open conformation they allow Na(+) ions to selectively pass through the pore, along their electrochemical gradient. The influx of Na+ ions provokes membrane depolarization, initiating the propagation of electrical signals throughout cells and tissues. The accessory beta subunits participate in localization and functional modulation of the Nav channels. Modulates the activity of SCN2A/Nav1.2, causing a hyperpolarizing shift in the voltage-dependence of inactivation of the channel and increasing the fraction of channels operating in the fast gating mode. Modulates the activity of SCN5A/Nav1.5. Could also regulate the atypical sodium channel SCN7A/Nav2.1. Modulates the activity of SCN10A/Nav1.8, regulating its oligomerization and accelerating the recovery from inactivation. The chain is Sodium channel regulatory subunit beta-3 from Macaca fascicularis (Crab-eating macaque).